Consider the following 195-residue polypeptide: Imidazoleglycerol-phosphate dehydratase (195 aa).

It belongs to the imidazoleglycerol-phosphate dehydratase family.

The protein resides in the cytoplasm. It carries out the reaction D-erythro-1-(imidazol-4-yl)glycerol 3-phosphate = 3-(imidazol-4-yl)-2-oxopropyl phosphate + H2O. It functions in the pathway amino-acid biosynthesis; L-histidine biosynthesis; L-histidine from 5-phospho-alpha-D-ribose 1-diphosphate: step 6/9. This chain is Imidazoleglycerol-phosphate dehydratase, found in Leuconostoc mesenteroides subsp. mesenteroides (strain ATCC 8293 / DSM 20343 / BCRC 11652 / CCM 1803 / JCM 6124 / NCDO 523 / NBRC 100496 / NCIMB 8023 / NCTC 12954 / NRRL B-1118 / 37Y).